Reading from the N-terminus, the 239-residue chain is Purine nucleoside phosphorylase DeoD-type (239 aa).

Residue His-5 coordinates a purine D-ribonucleoside. Phosphate contacts are provided by residues Gly-21, Arg-25, Arg-44, and 88 to 91 (RVGS). A purine D-ribonucleoside contacts are provided by residues 180–182 (EME) and 204–205 (SD). The active-site Proton donor is Asp-205.

The protein belongs to the PNP/UDP phosphorylase family. In terms of assembly, homohexamer; trimer of homodimers.

The enzyme catalyses a purine D-ribonucleoside + phosphate = a purine nucleobase + alpha-D-ribose 1-phosphate. It carries out the reaction a purine 2'-deoxy-D-ribonucleoside + phosphate = a purine nucleobase + 2-deoxy-alpha-D-ribose 1-phosphate. Functionally, catalyzes the reversible phosphorolytic breakdown of the N-glycosidic bond in the beta-(deoxy)ribonucleoside molecules, with the formation of the corresponding free purine bases and pentose-1-phosphate. This chain is Purine nucleoside phosphorylase DeoD-type, found in Salmonella choleraesuis (strain SC-B67).